The following is a 301-amino-acid chain: Oxygen-dependent coproporphyrinogen-III oxidase (301 aa).

Residue serine 92 participates in substrate binding. The a divalent metal cation site is built by histidine 96 and histidine 106. Catalysis depends on histidine 106, which acts as the Proton donor. 108–110 (NVR) is a binding site for substrate. Residues histidine 145 and histidine 175 each coordinate a divalent metal cation. Residues 240-275 (YVEFNLVWDRGTLFGLQTGGRTESILMSMPPLVRWE) form an important for dimerization region. 258 to 260 (GGR) serves as a coordination point for substrate.

This sequence belongs to the aerobic coproporphyrinogen-III oxidase family. As to quaternary structure, homodimer. A divalent metal cation is required as a cofactor.

The protein resides in the cytoplasm. The enzyme catalyses coproporphyrinogen III + O2 + 2 H(+) = protoporphyrinogen IX + 2 CO2 + 2 H2O. Its pathway is porphyrin-containing compound metabolism; protoporphyrin-IX biosynthesis; protoporphyrinogen-IX from coproporphyrinogen-III (O2 route): step 1/1. Involved in the heme biosynthesis. Catalyzes the aerobic oxidative decarboxylation of propionate groups of rings A and B of coproporphyrinogen-III to yield the vinyl groups in protoporphyrinogen-IX. The polypeptide is Oxygen-dependent coproporphyrinogen-III oxidase (Cronobacter sakazakii (strain ATCC BAA-894) (Enterobacter sakazakii)).